Consider the following 1201-residue polypeptide: DNA-directed RNA polymerase subunit beta' (1201 aa).

4 residues coordinate Zn(2+): Cys60, Cys62, Cys75, and Cys78. 3 residues coordinate Mg(2+): Asp449, Asp451, and Asp453. Zn(2+) is bound by residues Cys818, Cys892, Cys899, and Cys902.

The protein belongs to the RNA polymerase beta' chain family. In terms of assembly, the RNAP catalytic core consists of 2 alpha, 1 beta, 1 beta' and 1 omega subunit. When a sigma factor is associated with the core the holoenzyme is formed, which can initiate transcription. It depends on Mg(2+) as a cofactor. Requires Zn(2+) as cofactor.

The catalysed reaction is RNA(n) + a ribonucleoside 5'-triphosphate = RNA(n+1) + diphosphate. In terms of biological role, DNA-dependent RNA polymerase catalyzes the transcription of DNA into RNA using the four ribonucleoside triphosphates as substrates. The chain is DNA-directed RNA polymerase subunit beta' from Listeria innocua serovar 6a (strain ATCC BAA-680 / CLIP 11262).